The sequence spans 146 residues: Bradykinin-like neuropeptide (146 aa).

Positions 1 to 24 (MTSSIYGFITLSVVALISQTTCRS) are cleaved as a signal peptide. 2 consecutive propeptides follow at residues 25–80 (LDLL…LMEA) and 92–146 (LRSY…FRYG).

As to expression, neuron L5.

Its subcellular location is the secreted. Its function is as follows. May have important functions in renal physiology and in animal behavior, as does bradykinin. The protein is Bradykinin-like neuropeptide (LUQ-1) of Aplysia californica (California sea hare).